The following is a 505-amino-acid chain: Maturase K (505 aa).

Belongs to the intron maturase 2 family. MatK subfamily.

The protein localises to the plastid. Its subcellular location is the chloroplast. In terms of biological role, usually encoded in the trnK tRNA gene intron. Probably assists in splicing its own and other chloroplast group II introns. In Dioon edule (Virgin's palm), this protein is Maturase K.